Reading from the N-terminus, the 204-residue chain is Putative peroxiredoxin ycf42 (204 aa).

Positions 5–163 (PKIGKTPPNF…LLRILESIQY (159 aa)) constitute a Thioredoxin domain.

Belongs to the peroxiredoxin family. AhpC/Prx1 subfamily.

Its subcellular location is the plastid. It is found in the chloroplast. It carries out the reaction a hydroperoxide + [protein]-dithiol = [protein]-disulfide + an alcohol + H2O. In Trieres chinensis (Marine centric diatom), this protein is Putative peroxiredoxin ycf42 (ycf42).